Here is a 391-residue protein sequence, read N- to C-terminus: Glutamate 5-kinase (391 aa).

An ATP-binding site is contributed by K17. 3 residues coordinate substrate: S57, D144, and N156. ATP contacts are provided by residues 176–177 (SD) and 216–222 (TGGMTTK). One can recognise a PUA domain in the interval 278-356 (QGQIVIDDGA…AWLAAEMGPA (79 aa)). The interval 370–391 (SRRRKAEPSSRNQKSSGSRVTS) is disordered. A compositionally biased stretch (polar residues) spans 378–391 (SSRNQKSSGSRVTS).

Belongs to the glutamate 5-kinase family.

Its subcellular location is the cytoplasm. It carries out the reaction L-glutamate + ATP = L-glutamyl 5-phosphate + ADP. It participates in amino-acid biosynthesis; L-proline biosynthesis; L-glutamate 5-semialdehyde from L-glutamate: step 1/2. Catalyzes the transfer of a phosphate group to glutamate to form L-glutamate 5-phosphate. In Cutibacterium acnes (strain DSM 16379 / KPA171202) (Propionibacterium acnes), this protein is Glutamate 5-kinase.